The primary structure comprises 268 residues: MEISSSSKKHFILVHGLCHGAWCWYRVVAALRAAGHRATALDMAASGAHPARVDEVGTFEEYSRPLLDAVAAAAAPGERLVLVGHSHGGLSVALAMERFPDKVAAAVFVAAAMPCVGKHMGVPTEEFMRRTAPEGLLMDCEMVAINNSQGSGVAINLGPTFLAQKYYQQSPAEDLALAKMLVRPGNQFMDDPVMKDESLLTNGNYGSVKKVYVIAKADSSSTEEMQRWMVAMSPGTDVEEIAGADHAVMNSKPRELCDILIKIANKYE.

The Acyl-ester intermediate role is filled by serine 86. Residues aspartate 218 and histidine 246 each act as charge relay system in the active site.

The protein belongs to the AB hydrolase superfamily.

Exhibits esterase activity towards naphthol AS-acetate in vitro. The protein is Esterase PIR7B (PIR7B) of Oryza sativa subsp. japonica (Rice).